Consider the following 661-residue polypeptide: Methyl-accepting chemotaxis protein McpA (661 aa).

The Cytoplasmic segment spans residues 1-16 (MKKILQLIKQRSITRK). The chain crosses the membrane as a helical span at residues 17-37 (LLVSFLSILIIPVVILAIFAY). The Extracellular portion of the chain corresponds to 38–281 (QSASSSLDRQ…IHEAAQPVLH (244 aa)). The region spanning 152-228 (ITDPYKTAST…QSGTELKGDW (77 aa)) is the Cache domain. A helical membrane pass occupies residues 282–302 (LALIVLAAAIIIGIIVMTLII). Residues 303-355 (RSITTPLKQLVGSSKRISEGDLTETIDIRSKDELGELGKSFNNMASSLRSLIH) form the HAMP domain. At 303–661 (RSITTPLKQL…RDMTKRFKIE (359 aa)) the chain is on the cytoplasmic side. The residue at position 370 (glutamate 370) is a Glutamate methyl ester (Glu). The 237-residue stretch at 374 to 610 (SAAQTSKATE…EVSGASEHIA (237 aa)) folds into the Methyl-accepting transducer domain. Glutamine 593 and glutamine 594 each carry deamidated glutamine. Residue glutamine 594 is modified to Glutamate methyl ester (Gln). Residues glutamate 629 and glutamate 636 each carry the glutamate methyl ester (Glu) modification.

The protein belongs to the methyl-accepting chemotaxis (MCP) protein family. In terms of assembly, interacts with FloT. In terms of processing, deamidated by CheD on Gln-593 and Gln-594, producing glutamate residues. The glutamate residues are then methylated. Other additional sites are deamidated and methylated as well.

It localises to the cell membrane. The protein localises to the membrane raft. Its function is as follows. Chemotactic-signal transducers respond to changes in the concentration of attractants and repellents in the environment, transduce a signal from the outside to the inside of the cell, and facilitate sensory adaptation through the variation of the level of methylation. All amino acids serve as attractants in B.subtilis, they appear to cause an increase in the turnover methyl groups, leading to methylation of an unidentified acceptor, while repellents have been shown to cause a decrease in methyl group turnover. The methyl groups are added by a methyltransferase and removed by a methylesterase. McpA is required for taxis towards glucose and alpha-methylglucoside. This chain is Methyl-accepting chemotaxis protein McpA (mcpA), found in Bacillus subtilis (strain 168).